Here is a 621-residue protein sequence, read N- to C-terminus: 1-deoxy-D-xylulose-5-phosphate synthase (621 aa).

Residues His80 and Gly121–Ser123 contribute to the thiamine diphosphate site. Asp152 contacts Mg(2+). Thiamine diphosphate contacts are provided by residues Gly153 to Ala154, Asn181, Tyr288, and Glu370. A Mg(2+)-binding site is contributed by Asn181.

Belongs to the transketolase family. DXPS subfamily. In terms of assembly, homodimer. Requires Mg(2+) as cofactor. It depends on thiamine diphosphate as a cofactor.

It carries out the reaction D-glyceraldehyde 3-phosphate + pyruvate + H(+) = 1-deoxy-D-xylulose 5-phosphate + CO2. The protein operates within metabolic intermediate biosynthesis; 1-deoxy-D-xylulose 5-phosphate biosynthesis; 1-deoxy-D-xylulose 5-phosphate from D-glyceraldehyde 3-phosphate and pyruvate: step 1/1. In terms of biological role, catalyzes the acyloin condensation reaction between C atoms 2 and 3 of pyruvate and glyceraldehyde 3-phosphate to yield 1-deoxy-D-xylulose-5-phosphate (DXP). This Pseudoalteromonas atlantica (strain T6c / ATCC BAA-1087) protein is 1-deoxy-D-xylulose-5-phosphate synthase.